Reading from the N-terminus, the 488-residue chain is Ribulose bisphosphate carboxylase large chain (488 aa).

2 residues coordinate substrate: Asn128 and Thr178. The Proton acceptor role is filled by Lys180. Lys182 contacts substrate. The Mg(2+) site is built by Lys206, Asp208, and Glu209. An N6-carboxylysine modification is found at Lys206. The Proton acceptor role is filled by His298. 3 residues coordinate substrate: Arg299, His331, and Ser383.

Belongs to the RuBisCO large chain family. Type I subfamily. In terms of assembly, heterohexadecamer of 8 large chains and 8 small chains. It depends on Mg(2+) as a cofactor.

It catalyses the reaction 2 (2R)-3-phosphoglycerate + 2 H(+) = D-ribulose 1,5-bisphosphate + CO2 + H2O. The catalysed reaction is D-ribulose 1,5-bisphosphate + O2 = 2-phosphoglycolate + (2R)-3-phosphoglycerate + 2 H(+). RuBisCO catalyzes two reactions: the carboxylation of D-ribulose 1,5-bisphosphate, the primary event in carbon dioxide fixation, as well as the oxidative fragmentation of the pentose substrate. Both reactions occur simultaneously and in competition at the same active site. The chain is Ribulose bisphosphate carboxylase large chain from Variovorax paradoxus (strain S110).